The primary structure comprises 424 residues: Glycerol-3-phosphate dehydrogenase [NAD(+)] (424 aa).

NAD(+) is bound by residues 79-84 (GSGNWG), phenylalanine 111, and phenylalanine 167. Lysine 190 provides a ligand contact to substrate. Residue alanine 223 coordinates NAD(+). Lysine 283 serves as the catalytic Proton acceptor. Arginine 348 and glutamine 377 together coordinate NAD(+). 348-349 (RN) is a substrate binding site.

It belongs to the NAD-dependent glycerol-3-phosphate dehydrogenase family.

It catalyses the reaction sn-glycerol 3-phosphate + NAD(+) = dihydroxyacetone phosphate + NADH + H(+). The polypeptide is Glycerol-3-phosphate dehydrogenase [NAD(+)] (GPD) (Eremothecium gossypii (strain ATCC 10895 / CBS 109.51 / FGSC 9923 / NRRL Y-1056) (Yeast)).